The primary structure comprises 56 residues: Large ribosomal subunit protein bL33 (56 aa).

A compositionally biased stretch (basic and acidic residues) spans 1 to 12 (MASKGGREKIKL). The segment at 1–27 (MASKGGREKIKLESTAGTGHFYTTNKN) is disordered.

It belongs to the bacterial ribosomal protein bL33 family.

The chain is Large ribosomal subunit protein bL33 from Leptothrix cholodnii (strain ATCC 51168 / LMG 8142 / SP-6) (Leptothrix discophora (strain SP-6)).